The following is a 209-amino-acid chain: Large ribosomal subunit protein uL3 (209 aa).

Positions 127-147 (YSRGPMGHGSKSHRVAGARSA) are disordered.

This sequence belongs to the universal ribosomal protein uL3 family. As to quaternary structure, part of the 50S ribosomal subunit. Forms a cluster with proteins L14 and L19.

In terms of biological role, one of the primary rRNA binding proteins, it binds directly near the 3'-end of the 23S rRNA, where it nucleates assembly of the 50S subunit. This is Large ribosomal subunit protein uL3 from Finegoldia magna (strain ATCC 29328 / DSM 20472 / WAL 2508) (Peptostreptococcus magnus).